The sequence spans 170 residues: Phosphopantetheine adenylyltransferase (170 aa).

Thr-14 contacts substrate. ATP-binding positions include Thr-14–Phe-15 and His-22. Residues Lys-46, Leu-78, and Arg-92 each contribute to the substrate site. Residues Gly-93–Arg-95, Glu-103, and Trp-128–Thr-134 each bind ATP.

It belongs to the bacterial CoaD family. As to quaternary structure, homohexamer. Requires Mg(2+) as cofactor.

It is found in the cytoplasm. It carries out the reaction (R)-4'-phosphopantetheine + ATP + H(+) = 3'-dephospho-CoA + diphosphate. It functions in the pathway cofactor biosynthesis; coenzyme A biosynthesis; CoA from (R)-pantothenate: step 4/5. Its function is as follows. Reversibly transfers an adenylyl group from ATP to 4'-phosphopantetheine, yielding dephospho-CoA (dPCoA) and pyrophosphate. The protein is Phosphopantetheine adenylyltransferase of Oleidesulfovibrio alaskensis (strain ATCC BAA-1058 / DSM 17464 / G20) (Desulfovibrio alaskensis).